The primary structure comprises 356 residues: S-adenosylmethionine:tRNA ribosyltransferase-isomerase (356 aa).

Belongs to the QueA family. In terms of assembly, monomer.

Its subcellular location is the cytoplasm. It carries out the reaction 7-aminomethyl-7-carbaguanosine(34) in tRNA + S-adenosyl-L-methionine = epoxyqueuosine(34) in tRNA + adenine + L-methionine + 2 H(+). It functions in the pathway tRNA modification; tRNA-queuosine biosynthesis. In terms of biological role, transfers and isomerizes the ribose moiety from AdoMet to the 7-aminomethyl group of 7-deazaguanine (preQ1-tRNA) to give epoxyqueuosine (oQ-tRNA). The polypeptide is S-adenosylmethionine:tRNA ribosyltransferase-isomerase (Xanthomonas axonopodis pv. citri (strain 306)).